Here is a 259-residue protein sequence, read N- to C-terminus: 14-3-3-like protein (259 aa).

It belongs to the 14-3-3 family.

The polypeptide is 14-3-3-like protein (Helianthus annuus (Common sunflower)).